Here is a 343-residue protein sequence, read N- to C-terminus: Aspartate carbamoyltransferase catalytic subunit (343 aa).

2 residues coordinate carbamoyl phosphate: arginine 91 and threonine 92. Lysine 119 is a binding site for L-aspartate. Carbamoyl phosphate contacts are provided by arginine 141, histidine 171, and glutamine 174. Residues arginine 204 and arginine 259 each coordinate L-aspartate. Carbamoyl phosphate is bound by residues glycine 300 and proline 301.

The protein belongs to the aspartate/ornithine carbamoyltransferase superfamily. ATCase family. As to quaternary structure, heterododecamer (2C3:3R2) of six catalytic PyrB chains organized as two trimers (C3), and six regulatory PyrI chains organized as three dimers (R2).

The enzyme catalyses carbamoyl phosphate + L-aspartate = N-carbamoyl-L-aspartate + phosphate + H(+). It functions in the pathway pyrimidine metabolism; UMP biosynthesis via de novo pathway; (S)-dihydroorotate from bicarbonate: step 2/3. Catalyzes the condensation of carbamoyl phosphate and aspartate to form carbamoyl aspartate and inorganic phosphate, the committed step in the de novo pyrimidine nucleotide biosynthesis pathway. This is Aspartate carbamoyltransferase catalytic subunit from Burkholderia cenocepacia (strain HI2424).